Reading from the N-terminus, the 596-residue chain is Probable protein phosphatase 2C 26 (596 aa).

The tract at residues 122–154 (SGPLDPAVPFSGPLPAKPPKPASSSSRGFSRRF) is disordered. Residues 177 to 584 (LRRDDGVQWA…DDVTVMVISL (408 aa)) form the PPM-type phosphatase domain. Mn(2+) is bound by residues Asp212, Gly213, Asp512, and Asp575.

The protein belongs to the PP2C family. The cofactor is Mg(2+). Mn(2+) serves as cofactor.

It catalyses the reaction O-phospho-L-seryl-[protein] + H2O = L-seryl-[protein] + phosphate. The catalysed reaction is O-phospho-L-threonyl-[protein] + H2O = L-threonyl-[protein] + phosphate. The sequence is that of Probable protein phosphatase 2C 26 from Oryza sativa subsp. japonica (Rice).